The following is a 496-amino-acid chain: Ankyrin repeat domain-containing protein 34A (496 aa).

ANK repeat units lie at residues 4-33, 37-72, 76-106, and 110-139; these read TEGH…YVNE, QGET…DPNI, LGRT…DPSV, and AGAS…AKGT. Q15 carries the N5-methylglutamine modification. Polar residues-rich tracts occupy residues 147–162 and 180–191; these read DTSP…YLNS and FCTSPSEIQLQT. Residues 147-473 are disordered; that stretch reads DTSPSGTKKT…TKRKLVRRHS (327 aa). Positions 204-214 are enriched in basic and acidic residues; it reads AQEEEEKRDVF. A compositionally biased stretch (pro residues) spans 218–233; the sequence is LPKPPDDPSPSEPLPK. The segment covering 234-243 has biased composition (basic residues); it reads PPRHPPKPLK. T316 is modified (phosphothreonine). The segment covering 463–473 has biased composition (basic residues); that stretch reads RTKRKLVRRHS.

This sequence belongs to the ANKRD34 family. Methylated at Gln-15 by N6AMT1.

The protein is Ankyrin repeat domain-containing protein 34A (ANKRD34A) of Homo sapiens (Human).